Reading from the N-terminus, the 89-residue chain is Elongation factor 1-beta (89 aa).

This sequence belongs to the EF-1-beta/EF-1-delta family.

Its function is as follows. Promotes the exchange of GDP for GTP in EF-1-alpha/GDP, thus allowing the regeneration of EF-1-alpha/GTP that could then be used to form the ternary complex EF-1-alpha/GTP/AAtRNA. The polypeptide is Elongation factor 1-beta (Methanococcus vannielii (strain ATCC 35089 / DSM 1224 / JCM 13029 / OCM 148 / SB)).